The primary structure comprises 541 residues: Myrosinase 1 (541 aa).

The signal sequence occupies residues 1 to 19; it reads MKLLMLAFVFLLALATCKG. Intrachain disulfides connect cysteine 24/cysteine 449, cysteine 32/cysteine 445, and cysteine 224/cysteine 232. An N-linked (GlcNAc...) asparagine glycan is attached at asparagine 33. An a beta-D-glucoside-binding site is contributed by glutamine 57. Asparagine 108 carries an N-linked (GlcNAc...) asparagine glycan. A beta-D-glucoside is bound at residue histidine 159. Asparagine 175 carries an N-linked (GlcNAc...) asparagine glycan. 204-205 is a binding site for a beta-D-glucoside; sequence NQ. An N-linked (GlcNAc...) asparagine glycan is attached at asparagine 236. Tyrosine 348 contributes to the a beta-D-glucoside binding site. Asparagine 356 and asparagine 379 each carry an N-linked (GlcNAc...) asparagine glycan. Residues glutamate 420, tryptophan 468, 475–476, and phenylalanine 484 contribute to the a beta-D-glucoside site; that span reads EF. Residue glutamate 420 is the Nucleophile of the active site. Asparagine 493 and asparagine 512 each carry an N-linked (GlcNAc...) asparagine glycan.

This sequence belongs to the glycosyl hydrolase 1 family. As to quaternary structure, homodimer. As to expression, expressed in guard cells, phloem-associated cells and myrosin cells.

Its subcellular location is the vacuole. It carries out the reaction a thioglucoside + H2O = a sugar + a thiol.. The enzyme catalyses Hydrolysis of terminal, non-reducing beta-D-glucosyl residues with release of beta-D-glucose.. Functionally, degradation of glucosinolates (glucose residue linked by a thioglucoside bound to an amino acid derivative) to glucose, sulfate and any of the products: thiocyanates, isothiocyanates, nitriles, epithionitriles or oxazolidine-2-thiones. These toxic degradation products can deter insect herbivores. Seems to function in abscisic acid (ABA) and methyl jasmonate (MeJA) signaling in guard cells. Functionally redundant with TGG2. Hydrolyzes sinigrin and, with lower efficiency, p-nitrophenyl beta-D-glucoside. The chain is Myrosinase 1 from Arabidopsis thaliana (Mouse-ear cress).